The primary structure comprises 555 residues: Suppressor of tumorigenicity 7 protein-like (555 aa).

Helical transmembrane passes span 36-56 (GLAG…LYAL) and 80-100 (FYVA…IFEW). Residues 126 to 148 (TESSISEPGSPSNNRESETSRQN) are disordered.

It belongs to the ST7 family.

Its subcellular location is the membrane. This is Suppressor of tumorigenicity 7 protein-like (ST7L) from Bos taurus (Bovine).